Reading from the N-terminus, the 430-residue chain is Tryptophan synthase beta chain (430 aa).

Lys95 is subject to N6-(pyridoxal phosphate)lysine.

This sequence belongs to the TrpB family. As to quaternary structure, tetramer of two alpha and two beta chains. It depends on pyridoxal 5'-phosphate as a cofactor.

The enzyme catalyses (1S,2R)-1-C-(indol-3-yl)glycerol 3-phosphate + L-serine = D-glyceraldehyde 3-phosphate + L-tryptophan + H2O. Its pathway is amino-acid biosynthesis; L-tryptophan biosynthesis; L-tryptophan from chorismate: step 5/5. The beta subunit is responsible for the synthesis of L-tryptophan from indole and L-serine. The chain is Tryptophan synthase beta chain from Halobacterium salinarum (strain ATCC 29341 / DSM 671 / R1).